We begin with the raw amino-acid sequence, 366 residues long: Terpene cyclase-like protein flvF (366 aa).

The protein belongs to the terpene synthase family. Homodimer.

The enzyme catalyses N,N-dimethyl-cadaverine + 2,6,9-trimethyl-13-oxatetracyclo[6.3.1.1(6,9).0(1,5)]tridecane carbocation = pre-flavunoidine + H(+). It functions in the pathway secondary metabolite biosynthesis; terpenoid biosynthesis. Its function is as follows. Terpene cyclase-like protein; part of the gene cluster that mediates the biosynthesis of flavunoidine, an alkaloidal terpenoid with a tetracyclic cage-like core connected to dimethylcadaverine via a C-N bond and acylated with 5,5-dimethyl-L-pipecolate. The tetracyclic core is synthesized by the terpene cyclase flvE and the cytochrome P450 monooxygenase flvD. The terpene cyclase flvE catalyzes the cyclization of farnesyl pyrophosphate (FPP) to form (1R,4R,5S)-(+)-acoradiene and the cytochrome P450 monooxygenase flvD is then responsible for oxidative conversion of (1R,4R,5S)-(+)-acoradiene into the tetracyclic cage present in the final product flavunoidine. In parallel, the N-methyltransferase flvH dimethylates L-lysine to give N,N-dimethyl-L-Lysin which is decarboxylated by flvG to afford dimethylcadaverine. The terpene cyclase-like protein flvF is the enzyme that attaches the dimethylcadaverine precusor at the C-7 of the tetracyclic cage to yield pre-flavunoidine. The cytochrome monooxygenase flvC hydroxylates the C-10 position of pre-flavunoidine whereas the NRPS flvI acylates the terpenoid core at the hydroxylated C-10 with dimethylpipecolate to yield final flavunoidine. The bifunctional enzyme flvA and the dehydrogenase flvB are responsible for the synthesis of the dimethylpipecolate precursor. The PLP-dependent lyase domain of flvA might use L-O-acetyl-homoserine and alpha-keto-isovalerate to form an intermediary ketone that can cyclize intramolecularly to yield an imine. The imine can be reduced by flvB to yield the 6-carboxylated pipecolate. The C-terminal alpha-KG-dependent oxygenase domain of flvA is then proposed to catalyze the decarboxylation to yield dimethylpipecolate. The protein is Terpene cyclase-like protein flvF of Aspergillus flavus (strain ATCC 200026 / FGSC A1120 / IAM 13836 / NRRL 3357 / JCM 12722 / SRRC 167).